A 121-amino-acid polypeptide reads, in one-letter code: Large ribosomal subunit protein uL14 (121 aa).

This sequence belongs to the universal ribosomal protein uL14 family. As to quaternary structure, part of the 50S ribosomal subunit. Forms a cluster with proteins L3 and L19. In the 70S ribosome, L14 and L19 interact and together make contacts with the 16S rRNA in bridges B5 and B8.

In terms of biological role, binds to 23S rRNA. Forms part of two intersubunit bridges in the 70S ribosome. The protein is Large ribosomal subunit protein uL14 of Aquifex pyrophilus.